We begin with the raw amino-acid sequence, 132 residues long: Agouti-related protein (132 aa).

The first 20 residues, 1-20, serve as a signal peptide directing secretion; that stretch reads MLTAAVLSCALLLALPATRG. Residues 21-82 constitute a propeptide that is removed on maturation; the sequence is AQMGLAPMEG…VLDLQDREPR (62 aa). Disulfide bonds link Cys87–Cys102, Cys94–Cys108, Cys101–Cys119, Cys105–Cys129, and Cys110–Cys117. An Agouti domain is found at 87–129; the sequence is CVRLHESCLGQQVPCCDPCATCYCRFFNAFCYCRKLGTAMNPC. Positions 111–113 are interaction with melanocortin receptors; sequence RFF.

In terms of assembly, interacts with melanocortin receptors MC3R, MC4R and MC5R. As to expression, expressed primarily in the adrenal gland, subthalamic nucleus, and hypothalamus, with a lower level of expression occurring in testis, lung, and kidney.

It is found in the secreted. The protein resides in the golgi apparatus lumen. Plays a role in weight homeostasis. Involved in the control of feeding behavior through the central melanocortin system. Acts as alpha melanocyte-stimulating hormone antagonist by inhibiting cAMP production mediated by stimulation of melanocortin receptors within the hypothalamus and adrenal gland. Has very low activity with MC5R. Is an inverse agonist for MC3R and MC4R being able to suppress their constitutive activity. It promotes MC3R and MC4R endocytosis in an arrestin-dependent manner. This is Agouti-related protein (AGRP) from Homo sapiens (Human).